A 232-amino-acid polypeptide reads, in one-letter code: Large ribosomal subunit protein uL1 (232 aa).

The protein belongs to the universal ribosomal protein uL1 family. Part of the 50S ribosomal subunit.

Functionally, binds directly to 23S rRNA. The L1 stalk is quite mobile in the ribosome, and is involved in E site tRNA release. Its function is as follows. Protein L1 is also a translational repressor protein, it controls the translation of the L11 operon by binding to its mRNA. In Parabacteroides distasonis (strain ATCC 8503 / DSM 20701 / CIP 104284 / JCM 5825 / NCTC 11152), this protein is Large ribosomal subunit protein uL1.